The following is a 141-amino-acid chain: Putative pre-16S rRNA nuclease (141 aa).

The protein belongs to the YqgF nuclease family.

It is found in the cytoplasm. Its function is as follows. Could be a nuclease involved in processing of the 5'-end of pre-16S rRNA. The protein is Putative pre-16S rRNA nuclease of Histophilus somni (strain 129Pt) (Haemophilus somnus).